We begin with the raw amino-acid sequence, 162 residues long: Endoribonuclease YbeY (162 aa).

Residues H118, H122, and H128 each contribute to the Zn(2+) site.

It belongs to the endoribonuclease YbeY family. Zn(2+) is required as a cofactor.

The protein resides in the cytoplasm. Its function is as follows. Single strand-specific metallo-endoribonuclease involved in late-stage 70S ribosome quality control and in maturation of the 3' terminus of the 16S rRNA. In Glaesserella parasuis serovar 5 (strain SH0165) (Haemophilus parasuis), this protein is Endoribonuclease YbeY.